A 592-amino-acid polypeptide reads, in one-letter code: Aspartate--tRNA ligase (592 aa).

L-aspartate is bound at residue Glu-173. Residues Gln-197 to Lys-200 form an aspartate region. L-aspartate is bound at residue Arg-219. Residues Arg-219–Glu-221 and Gln-228 each bind ATP. His-448 contacts L-aspartate. Glu-482 contributes to the ATP binding site. Arg-489 contributes to the L-aspartate binding site. Position 534 to 537 (Gly-534 to Arg-537) interacts with ATP.

Belongs to the class-II aminoacyl-tRNA synthetase family. Type 1 subfamily. As to quaternary structure, homodimer.

Its subcellular location is the cytoplasm. The catalysed reaction is tRNA(Asp) + L-aspartate + ATP = L-aspartyl-tRNA(Asp) + AMP + diphosphate. Catalyzes the attachment of L-aspartate to tRNA(Asp) in a two-step reaction: L-aspartate is first activated by ATP to form Asp-AMP and then transferred to the acceptor end of tRNA(Asp). This is Aspartate--tRNA ligase from Shewanella baltica (strain OS195).